Consider the following 101-residue polypeptide: Chaperone modulatory protein CbpM (101 aa).

It belongs to the CbpM family.

Functionally, interacts with CbpA and inhibits both the DnaJ-like co-chaperone activity and the DNA binding activity of CbpA. Together with CbpA, modulates the activity of the DnaK chaperone system. Does not inhibit the co-chaperone activity of DnaJ. The protein is Chaperone modulatory protein CbpM of Escherichia coli (strain K12 / MC4100 / BW2952).